Here is an 810-residue protein sequence, read N- to C-terminus: Hemoglobin-haptoglobin utilization protein B (810 aa).

Positions 1–22 (MPIPFKPVLAVAAIAQAFPAFA) are cleaved as a signal peptide. A TBDR plug domain is found at 34–166 (NEITVTGTHK…LGGAVNYQTK (133 aa)). The TBDR beta-barrel domain maps to 175-810 (DKPYHLGIKG…SYNFTIEAKF (636 aa)). The short motif at 793 to 810 (QRFTSPGRSYNFTIEAKF) is the TonB C-terminal box element.

Belongs to the TonB-dependent receptor family.

The protein localises to the cell outer membrane. Functionally, acts as a receptor for hemoglobin or the hemoglobin/haptoglobin complex and is required for heme uptake. This chain is Hemoglobin-haptoglobin utilization protein B (hpuB), found in Neisseria meningitidis serogroup C.